The primary structure comprises 440 residues: L-gulonolactone oxidase (440 aa).

Residues 17 to 187 form the FAD-binding PCMH-type domain; the sequence is YSCEPELYFE…LNVTIQCVPA (171 aa). The residue at position 54 (His54) is a Pros-8alpha-FAD histidine. Residues 245–267 traverse the membrane as a helical segment; the sequence is WFWNYAIGYYLLEFLLWISVFVP.

Belongs to the oxygen-dependent FAD-linked oxidoreductase family. It depends on FAD as a cofactor.

It localises to the microsome membrane. The protein resides in the endoplasmic reticulum membrane. It catalyses the reaction L-gulono-1,4-lactone + O2 = L-ascorbate + H2O2 + H(+). It participates in cofactor biosynthesis; L-ascorbate biosynthesis via UDP-alpha-D-glucuronate pathway; L-ascorbate from UDP-alpha-D-glucuronate: step 4/4. Its function is as follows. Oxidizes L-gulono-1,4-lactone to hydrogen peroxide and L-xylo-hexulonolactone which spontaneously isomerizes to L-ascorbate. The polypeptide is L-gulonolactone oxidase (GULO) (Scyliorhinus torazame (Cloudy catshark)).